Consider the following 213-residue polypeptide: Large ribosomal subunit protein uL3 (213 aa).

It belongs to the universal ribosomal protein uL3 family. As to quaternary structure, part of the 50S ribosomal subunit. Forms a cluster with proteins L14 and L19.

In terms of biological role, one of the primary rRNA binding proteins, it binds directly near the 3'-end of the 23S rRNA, where it nucleates assembly of the 50S subunit. This is Large ribosomal subunit protein uL3 from Kosmotoga olearia (strain ATCC BAA-1733 / DSM 21960 / TBF 19.5.1).